We begin with the raw amino-acid sequence, 274 residues long: 2,3,4,5-tetrahydropyridine-2,6-dicarboxylate N-succinyltransferase (274 aa).

This sequence belongs to the transferase hexapeptide repeat family.

It is found in the cytoplasm. It catalyses the reaction (S)-2,3,4,5-tetrahydrodipicolinate + succinyl-CoA + H2O = (S)-2-succinylamino-6-oxoheptanedioate + CoA. Its pathway is amino-acid biosynthesis; L-lysine biosynthesis via DAP pathway; LL-2,6-diaminopimelate from (S)-tetrahydrodipicolinate (succinylase route): step 1/3. The sequence is that of 2,3,4,5-tetrahydropyridine-2,6-dicarboxylate N-succinyltransferase from Erwinia tasmaniensis (strain DSM 17950 / CFBP 7177 / CIP 109463 / NCPPB 4357 / Et1/99).